We begin with the raw amino-acid sequence, 1335 residues long: Aldehyde oxidase 3 (1335 aa).

The 2Fe-2S ferredoxin-type domain maps to 8-95 (DELIFFVNGK…GAAVTTVEGI (88 aa)). [2Fe-2S] cluster contacts are provided by cysteine 47, cysteine 52, cysteine 55, and cysteine 77. A Mo-molybdopterin-binding site is contributed by glutamine 116. Positions 117, 120, 152, and 154 each coordinate [2Fe-2S] cluster. One can recognise an FAD-binding PCMH-type domain in the interval 236–421 (FRGERTTWIA…ISVFVPRSSK (186 aa)). Position 264–271 (264–271 (LVIGNTYL)) interacts with FAD. A Phosphoserine modification is found at serine 320. FAD contacts are provided by serine 354, histidine 358, aspartate 367, and leucine 411. Positions 802, 1043, and 1199 each coordinate Mo-molybdopterin. Glutamate 1266 acts as the Proton acceptor; for azaheterocycle hydroxylase activity in catalysis.

It belongs to the xanthine dehydrogenase family. As to quaternary structure, homodimer. It depends on [2Fe-2S] cluster as a cofactor. Requires FAD as cofactor. Mo-molybdopterin serves as cofactor. In terms of tissue distribution, highly expressed in liver (at protein level). In liver, the expression is greater in males than females.

It is found in the cytoplasm. The catalysed reaction is an aldehyde + O2 + H2O = a carboxylate + H2O2 + H(+). Inhibited by potassium cyanide, menadione, benzamidine, raloxifene and norharmane. Functionally, oxidase with broad substrate specificity, oxidizing aromatic azaheterocycles, such as N1-methylnicotinamide and phthalazine, as well as aldehydes, such as benzaldehyde, retinal and pyridoxal. Plays a key role in the metabolism of xenobiotics and drugs containing aromatic azaheterocyclic substituents. Is probably involved in the regulation of reactive oxygen species homeostasis. May be a prominent source of superoxide generation via the one-electron reduction of molecular oxygen. May also catalyze nitric oxide (NO) production via the reduction of nitrite to NO with NADH or aldehyde as electron donor. This Mus musculus (Mouse) protein is Aldehyde oxidase 3 (Aox3).